A 509-amino-acid polypeptide reads, in one-letter code: MEAILSFAGIGINYKKLQSKLQHDFGRFLKALTITARALPGQPKHIAIRQETAFTLQGEYIYFPILLRKQFEMFNIVYTAHPVSLRTLPCVETEFPLFNYQQEMVDKIHKKLLPPYGRFYLHLNTGLGKTRIAISIIQKLLYPTLVIVPTKAIQIQWIDELTLLLPHLRVAAYNNAACKKKDITSKEYDVIVGIINTLRKKPEAFFEPFGLVVLDEAHELHSPENYKIFWKIQLSRILGLSATPLDRPDGMDKIIIHHLGQPQRTVSPTTTFSGYVREIEYQGHPDFVKPVCINEKVSAIATIDKLLQDPSRIQLVVNETKRLYSLHTAEPQKWGTNEPYGIIIFVEFRKLLEIFYQALSKEFKDVEIIVPEVALLCGGVSNTALSQAHSASIILLTYGYGRRGISFKHMTSIIMATPRRNNMEQILGRITRQGSDEKKVRIVVDIKDTLSPLSSQVYDRHRIYKKKGYPIFKCSASYQQPYSSNEVLIWDPYNESCLASTTTPPSPSK.

Residues 110–262 (KKLLPPYGRF…KIIIHHLGQP (153 aa)) enclose the Helicase ATP-binding domain. ATP is bound at residue 123-130 (LNTGLGKT). The DEAH box motif lies at 215 to 218 (DEAH).

It belongs to the DEAD box helicase family. DEAH subfamily.

The catalysed reaction is ATP + H2O = ADP + phosphate + H(+). In African swine fever virus (isolate Tick/Malawi/Lil 20-1/1983) (ASFV), this protein is Putative ATP-dependent RNA helicase QP509L.